The chain runs to 351 residues: tRNA pseudouridine synthase D (351 aa).

The active-site Nucleophile is the aspartate 96. The TRUD domain occupies 174–304 (GAPNYFGPQR…MKPERRPLVA (131 aa)). The disordered stretch occupies residues 244–268 (VLPGEPEPSGAGPTGPLWGDGGTLA).

The protein belongs to the pseudouridine synthase TruD family.

The catalysed reaction is uridine(13) in tRNA = pseudouridine(13) in tRNA. Its function is as follows. Responsible for synthesis of pseudouridine from uracil-13 in transfer RNAs. The sequence is that of tRNA pseudouridine synthase D from Marinobacter nauticus (strain ATCC 700491 / DSM 11845 / VT8) (Marinobacter aquaeolei).